Reading from the N-terminus, the 135-residue chain is Holo-[acyl-carrier-protein] synthase (135 aa).

Positions 8 and 58 each coordinate Mg(2+).

The protein belongs to the P-Pant transferase superfamily. AcpS family. The cofactor is Mg(2+).

The protein localises to the cytoplasm. The enzyme catalyses apo-[ACP] + CoA = holo-[ACP] + adenosine 3',5'-bisphosphate + H(+). In terms of biological role, transfers the 4'-phosphopantetheine moiety from coenzyme A to a Ser of acyl-carrier-protein. This chain is Holo-[acyl-carrier-protein] synthase, found in Ligilactobacillus salivarius (strain UCC118) (Lactobacillus salivarius).